The following is a 378-amino-acid chain: tRNA N(3)-cytidine methyltransferase METTL2B (378 aa).

Ala-2 is modified (N-acetylalanine). Ser-4 carries the post-translational modification Phosphoserine. The S-adenosyl-L-methionine site is built by Trp-78 and Tyr-82. Thr-154 carries the phosphothreonine modification. S-adenosyl-L-methionine is bound by residues Gly-188, Asp-213, Asp-239, Leu-240, and Ile-260.

Belongs to the methyltransferase superfamily. METL family. As to quaternary structure, monomer. Interacts with DALRD3.

It localises to the cytoplasm. The catalysed reaction is cytidine(32) in tRNA(Thr) + S-adenosyl-L-methionine = N(3)-methylcytidine(32) in tRNA(Thr) + S-adenosyl-L-homocysteine + H(+). The enzyme catalyses cytidine(32) in tRNA(Arg)(CCU) + S-adenosyl-L-methionine = N(3)-methylcytidine(32) in tRNA(Arg)(CCU) + S-adenosyl-L-homocysteine + H(+). In terms of biological role, S-adenosyl-L-methionine-dependent methyltransferase that mediates N(3)-methylcytidine modification of residue 32 of the tRNA anticodon loop of tRNA(Thr)(UGU) and tRNA(Arg)(CCU). This Homo sapiens (Human) protein is tRNA N(3)-cytidine methyltransferase METTL2B.